The primary structure comprises 64 residues: DNA gyrase inhibitor YacG (64 aa).

Positions 9, 12, 28, and 32 each coordinate Zn(2+). The interval 42 to 64 (DEENAIPGAPDMSDSDGWSEEQY) is disordered. Over residues 54–64 (SDSDGWSEEQY) the composition is skewed to acidic residues.

Belongs to the DNA gyrase inhibitor YacG family. As to quaternary structure, interacts with GyrB. The cofactor is Zn(2+).

Its function is as follows. Inhibits all the catalytic activities of DNA gyrase by preventing its interaction with DNA. Acts by binding directly to the C-terminal domain of GyrB, which probably disrupts DNA binding by the gyrase. This is DNA gyrase inhibitor YacG from Vibrio vulnificus (strain CMCP6).